The following is a 245-amino-acid chain: Putative [LysW]-aminoadipate/[LysW]-glutamate kinase (245 aa).

Substrate contacts are provided by Arg60 and Asn162.

This sequence belongs to the acetylglutamate kinase family. LysZ subfamily.

It is found in the cytoplasm. The enzyme catalyses [amino-group carrier protein]-C-terminal-N-(1,4-dicarboxybutan-1-yl)-L-glutamine + ATP = [amino-group carrier protein]-C-terminal-N-(1-carboxy-5-phosphooxy-5-oxopentan-1-yl)-L-glutamine + ADP. It catalyses the reaction [amino-group carrier protein]-C-terminal-gamma-(L-glutamyl)-L-glutamate + ATP = [amino-group carrier protein]-C-terminal-gamma-(5-phospho-L-glutamyl)-L-glutamate + ADP. Its pathway is amino-acid biosynthesis; L-lysine biosynthesis via AAA pathway; L-lysine from L-alpha-aminoadipate (Thermus route): step 2/5. It functions in the pathway amino-acid biosynthesis; L-arginine biosynthesis. Functionally, involved in both the arginine and lysine biosynthetic pathways. Phosphorylates the LysW-bound precursors glutamate (for arginine biosynthesis), respectively alpha-aminoadipate (for lysine biosynthesis). The sequence is that of Putative [LysW]-aminoadipate/[LysW]-glutamate kinase from Pyrococcus abyssi (strain GE5 / Orsay).